Reading from the N-terminus, the 294-residue chain is 4-hydroxy-tetrahydrodipicolinate synthase (294 aa).

T44 is a pyruvate binding site. Y132 (proton donor/acceptor) is an active-site residue. Catalysis depends on K161, which acts as the Schiff-base intermediate with substrate. I206 serves as a coordination point for pyruvate.

Belongs to the DapA family. In terms of assembly, homotetramer; dimer of dimers.

The protein localises to the cytoplasm. The enzyme catalyses L-aspartate 4-semialdehyde + pyruvate = (2S,4S)-4-hydroxy-2,3,4,5-tetrahydrodipicolinate + H2O + H(+). It participates in amino-acid biosynthesis; L-lysine biosynthesis via DAP pathway; (S)-tetrahydrodipicolinate from L-aspartate: step 3/4. Functionally, catalyzes the condensation of (S)-aspartate-beta-semialdehyde [(S)-ASA] and pyruvate to 4-hydroxy-tetrahydrodipicolinate (HTPA). In Thermotoga neapolitana (strain ATCC 49049 / DSM 4359 / NBRC 107923 / NS-E), this protein is 4-hydroxy-tetrahydrodipicolinate synthase.